Reading from the N-terminus, the 390-residue chain is GTPase Obg (390 aa).

The region spanning 1-159 (MKFVDEATIL…RELMLELLLL (159 aa)) is the Obg domain. Positions 160 to 333 (ADVGMLGLPN…LCWDVMNFLN (174 aa)) constitute an OBG-type G domain. Residues 166 to 173 (GLPNAGKS), 191 to 195 (FTTLI), 213 to 216 (DIPG), 283 to 286 (NKID), and 314 to 316 (SAA) each bind GTP. Mg(2+)-binding residues include S173 and T193. The segment covering 363–384 (EVEAEAESEDDDDWDEEDDDGV) has biased composition (acidic residues). The interval 363–390 (EVEAEAESEDDDDWDEEDDDGVEFIYER) is disordered.

It belongs to the TRAFAC class OBG-HflX-like GTPase superfamily. OBG GTPase family. Monomer. It depends on Mg(2+) as a cofactor.

The protein resides in the cytoplasm. An essential GTPase which binds GTP, GDP and possibly (p)ppGpp with moderate affinity, with high nucleotide exchange rates and a fairly low GTP hydrolysis rate. Plays a role in control of the cell cycle, stress response, ribosome biogenesis and in those bacteria that undergo differentiation, in morphogenesis control. This Yersinia enterocolitica serotype O:8 / biotype 1B (strain NCTC 13174 / 8081) protein is GTPase Obg.